The following is a 500-amino-acid chain: Phenylalanine--tRNA ligase alpha subunit (500 aa).

L-phenylalanine contacts are provided by residues threonine 343, 382–384 (QVD), and phenylalanine 423. Residue glutamate 425 coordinates Mg(2+). Phenylalanine 448 lines the L-phenylalanine pocket.

The protein belongs to the class-II aminoacyl-tRNA synthetase family. Phe-tRNA synthetase alpha subunit type 2 subfamily. In terms of assembly, tetramer of two alpha and two beta subunits. Requires Mg(2+) as cofactor.

The protein localises to the cytoplasm. It carries out the reaction tRNA(Phe) + L-phenylalanine + ATP = L-phenylalanyl-tRNA(Phe) + AMP + diphosphate + H(+). This Thermococcus onnurineus (strain NA1) protein is Phenylalanine--tRNA ligase alpha subunit.